Here is a 484-residue protein sequence, read N- to C-terminus: ATP synthase subunit beta (484 aa).

ATP is bound at residue 169-176 (GGAGVGKT).

It belongs to the ATPase alpha/beta chains family. F-type ATPases have 2 components, CF(1) - the catalytic core - and CF(0) - the membrane proton channel. CF(1) has five subunits: alpha(3), beta(3), gamma(1), delta(1), epsilon(1). CF(0) has three main subunits: a(1), b(2) and c(9-12). The alpha and beta chains form an alternating ring which encloses part of the gamma chain. CF(1) is attached to CF(0) by a central stalk formed by the gamma and epsilon chains, while a peripheral stalk is formed by the delta and b chains.

The protein localises to the cell membrane. It carries out the reaction ATP + H2O + 4 H(+)(in) = ADP + phosphate + 5 H(+)(out). Functionally, produces ATP from ADP in the presence of a proton gradient across the membrane. The catalytic sites are hosted primarily by the beta subunits. This is ATP synthase subunit beta from Nocardioides sp. (strain ATCC BAA-499 / JS614).